A 53-amino-acid chain; its full sequence is Metallocarboxypeptidase inhibitor b (53 aa).

3 disulfide bridges follow: C9–C23, C15–C51, and C27–C38. A53 is a binding site for Zn(2+).

Its function is as follows. Metallocarboxypeptidase inhibitor. Has an inhibitory effect on bovine CPA1 and porcine CPB1. Does not inhibit D.melanogaster svr (carboxypeptidase D). Shows no activity against serine proteases subtilisin or bovine trypsin, cysteine protease papain, and aspartyl protease porcine pepsin. The polypeptide is Metallocarboxypeptidase inhibitor b (Nerita versicolor (Four-tooth nerite)).